We begin with the raw amino-acid sequence, 1162 residues long: Enhanced level of genomic instability 1 (1162 aa).

Disordered regions lie at residues 1–136 (MTDV…ADNQ), 144–163 (KAGKPENVGVSPVSTAKPKP), 179–202 (LGVNEGGAESPADQEIGSEAATPT), 249–319 (KTDA…TKKR), 348–380 (METPKRRTLRRKSQQETPIVAESTPSSRPRRSC), 611–634 (RSMEQNMAQNEEEAKPPPSAPNGE), and 666–697 (WSGNGGSNRNSQGMDDTFDMSNDSASMGSSSN). The segment covering 65-78 (KQKHREKHKRKREE) has biased composition (basic residues). Over residues 79 to 111 (KRRAALMEDQKSTTEEVKANAKEKPQPLREKSS) the composition is skewed to basic and acidic residues. Over residues 125 to 136 (PLKSSTPVADNQ) the composition is skewed to polar residues. A compositionally biased stretch (basic residues) spans 268-278 (KRLRGRPRSRR). Low complexity-rich tracts occupy residues 666-676 (WSGNGGSNRNS) and 684-697 (DMSNDSASMGSSSN). 703-710 (GPSSSGKT) lines the ATP pocket. Disordered stretches follow at residues 900–923 (GDSTRDRTGGGIKSPTKTSNSRLA) and 975–1008 (QAAGGGSRTAAKRKSRSPKKAWLSSATGQKSDGH). The span at 984–993 (AAKRKSRSPK) shows a compositional bias: basic residues. Residues 998 to 1008 (SSATGQKSDGH) show a composition bias toward polar residues.

Belongs to the ELG1 family. As to quaternary structure, component of a heteropentameric Elg1 RFC-like complex composed of one large subunit (elg1) and four small subunits (RfC4, RfC38, CG8142 and RfC3). As part of the complex, might interact with the Enok complex, composed of enok, Br140, Eaf6 and Ing5. Within the Enok complex, interacts directly with Br140. In terms of tissue distribution, expressed at higher levels in the germline nurse cells than in the somatic follicle cells.

It localises to the nucleus. Functionally, has an important role in DNA replication and in maintaining genome integrity during replication stress. Promotes PCNA deubiquitination. As component of the Elg1 RFC-like complex, regulates the functions of the DNA polymerase processivity factor PCNA by unloading it from DNA after replication during the S phase of the cell cycle. The PCNA-unloading might be regulated via interaction with the Enok acetyltransferase complex. Might have a role in restarting of stalled/regressed replication forks during replication stress. In the ovaries, has a role in nurse cell endoreplication. In Drosophila melanogaster (Fruit fly), this protein is Enhanced level of genomic instability 1.